Consider the following 433-residue polypeptide: Enolase (433 aa).

Q163 contacts (2R)-2-phosphoglycerate. The Proton donor role is filled by E205. Residues D242, E286, and D313 each coordinate Mg(2+). (2R)-2-phosphoglycerate is bound by residues K338, R367, S368, and K389. Residue K338 is the Proton acceptor of the active site.

It belongs to the enolase family. Mg(2+) serves as cofactor.

The protein localises to the cytoplasm. It is found in the secreted. The protein resides in the cell surface. It catalyses the reaction (2R)-2-phosphoglycerate = phosphoenolpyruvate + H2O. Its pathway is carbohydrate degradation; glycolysis; pyruvate from D-glyceraldehyde 3-phosphate: step 4/5. Its function is as follows. Catalyzes the reversible conversion of 2-phosphoglycerate (2-PG) into phosphoenolpyruvate (PEP). It is essential for the degradation of carbohydrates via glycolysis. In Koribacter versatilis (strain Ellin345), this protein is Enolase.